A 182-amino-acid polypeptide reads, in one-letter code: Putative CTD phosphatase-like protein 355R (182 aa).

The FCP1 homology domain maps to 1 to 180; sequence MKNIFLDLDN…MRLKDVLNRH (180 aa).

The protein belongs to the IIV-6 355R family.

Functionally, may function as a phosphatase. The chain is Putative CTD phosphatase-like protein 355R from Invertebrate iridescent virus 6 (IIV-6).